We begin with the raw amino-acid sequence, 305 residues long: Protoheme IX farnesyltransferase (305 aa).

The next 9 helical transmembrane spans lie at 31–51 (VMSL…YSVH), 52–72 (PFIA…AGAI), 96–118 (VIES…FFMA), 123–145 (LLAS…IWLK), 151–171 (NIVI…AAVS), 179–199 (IILF…LALF), 225–245 (ILIY…IGMN), 247–267 (FIYL…AGSL), and 281–301 (FAYS…TNTI).

It belongs to the UbiA prenyltransferase family. Protoheme IX farnesyltransferase subfamily.

It localises to the cell membrane. The catalysed reaction is heme b + (2E,6E)-farnesyl diphosphate + H2O = Fe(II)-heme o + diphosphate. It participates in porphyrin-containing compound metabolism; heme O biosynthesis; heme O from protoheme: step 1/1. Its function is as follows. Converts heme B (protoheme IX) to heme O by substitution of the vinyl group on carbon 2 of heme B porphyrin ring with a hydroxyethyl farnesyl side group. This is Protoheme IX farnesyltransferase from Rickettsia africae (strain ESF-5).